Reading from the N-terminus, the 514-residue chain is Bifunctional purine biosynthesis protein PurH (514 aa).

The region spanning 1 to 146 (MPPLALLSTS…KNFAHVTVLC (146 aa)) is the MGS-like domain.

It belongs to the PurH family.

The catalysed reaction is (6R)-10-formyltetrahydrofolate + 5-amino-1-(5-phospho-beta-D-ribosyl)imidazole-4-carboxamide = 5-formamido-1-(5-phospho-D-ribosyl)imidazole-4-carboxamide + (6S)-5,6,7,8-tetrahydrofolate. It catalyses the reaction IMP + H2O = 5-formamido-1-(5-phospho-D-ribosyl)imidazole-4-carboxamide. It participates in purine metabolism; IMP biosynthesis via de novo pathway; 5-formamido-1-(5-phospho-D-ribosyl)imidazole-4-carboxamide from 5-amino-1-(5-phospho-D-ribosyl)imidazole-4-carboxamide (10-formyl THF route): step 1/1. Its pathway is purine metabolism; IMP biosynthesis via de novo pathway; IMP from 5-formamido-1-(5-phospho-D-ribosyl)imidazole-4-carboxamide: step 1/1. In Cyanothece sp. (strain PCC 7425 / ATCC 29141), this protein is Bifunctional purine biosynthesis protein PurH.